A 245-amino-acid chain; its full sequence is tRNA pseudouridine synthase A (245 aa).

Catalysis depends on Asp-52, which acts as the Nucleophile. Tyr-111 lines the substrate pocket.

This sequence belongs to the tRNA pseudouridine synthase TruA family. In terms of assembly, homodimer.

The catalysed reaction is uridine(38/39/40) in tRNA = pseudouridine(38/39/40) in tRNA. Functionally, formation of pseudouridine at positions 38, 39 and 40 in the anticodon stem and loop of transfer RNAs. This chain is tRNA pseudouridine synthase A, found in Ehrlichia chaffeensis (strain ATCC CRL-10679 / Arkansas).